We begin with the raw amino-acid sequence, 334 residues long: Anthranilate phosphoribosyltransferase (334 aa).

5-phospho-alpha-D-ribose 1-diphosphate-binding positions include G81, 84-85, T89, 91-94, 109-117, and A121; these read GD, NIST, and KHGNRSVSS. G81 lines the anthranilate pocket. Residue S93 participates in Mg(2+) binding. N112 contributes to the anthranilate binding site. R167 provides a ligand contact to anthranilate. Mg(2+)-binding residues include D225 and E226.

Belongs to the anthranilate phosphoribosyltransferase family. As to quaternary structure, homodimer. The cofactor is Mg(2+).

It catalyses the reaction N-(5-phospho-beta-D-ribosyl)anthranilate + diphosphate = 5-phospho-alpha-D-ribose 1-diphosphate + anthranilate. It functions in the pathway amino-acid biosynthesis; L-tryptophan biosynthesis; L-tryptophan from chorismate: step 2/5. Catalyzes the transfer of the phosphoribosyl group of 5-phosphorylribose-1-pyrophosphate (PRPP) to anthranilate to yield N-(5'-phosphoribosyl)-anthranilate (PRA). The chain is Anthranilate phosphoribosyltransferase from Histophilus somni (strain 2336) (Haemophilus somnus).